A 122-amino-acid chain; its full sequence is Large ribosomal subunit protein bL12 (122 aa).

The protein belongs to the bacterial ribosomal protein bL12 family. In terms of assembly, homodimer. Part of the ribosomal stalk of the 50S ribosomal subunit. Forms a multimeric L10(L12)X complex, where L10 forms an elongated spine to which 2 to 4 L12 dimers bind in a sequential fashion. Binds GTP-bound translation factors.

Forms part of the ribosomal stalk which helps the ribosome interact with GTP-bound translation factors. Is thus essential for accurate translation. The chain is Large ribosomal subunit protein bL12 from Stutzerimonas stutzeri (strain A1501) (Pseudomonas stutzeri).